A 128-amino-acid polypeptide reads, in one-letter code: uncharacterized protein (128 aa).

This is an uncharacterized protein from Saccharomyces cerevisiae (strain ATCC 204508 / S288c) (Baker's yeast).